The sequence spans 93 residues: Small ribosomal subunit protein uS19 (93 aa).

This sequence belongs to the universal ribosomal protein uS19 family.

Functionally, protein S19 forms a complex with S13 that binds strongly to the 16S ribosomal RNA. The protein is Small ribosomal subunit protein uS19 of Campylobacter lari (strain RM2100 / D67 / ATCC BAA-1060).